Reading from the N-terminus, the 108-residue chain is Glutaredoxin (108 aa).

Positions 3–103 (LAKAKEIVSG…PLLTEAGAIA (101 aa)) constitute a Glutaredoxin domain. A disulfide bond links Cys23 and Cys26.

The protein belongs to the glutaredoxin family. CPYC subfamily.

It is found in the cytoplasm. Its function is as follows. Has a glutathione-disulfide oxidoreductase activity in the presence of NADPH and glutathione reductase. Reduces low molecular weight disulfides and proteins. The polypeptide is Glutaredoxin (Solanum lycopersicum (Tomato)).